The chain runs to 157 residues: Small ribosomal subunit protein uS7 (157 aa).

The protein belongs to the universal ribosomal protein uS7 family. As to quaternary structure, part of the 30S ribosomal subunit. Contacts proteins S9 and S11.

In terms of biological role, one of the primary rRNA binding proteins, it binds directly to 16S rRNA where it nucleates assembly of the head domain of the 30S subunit. Is located at the subunit interface close to the decoding center, probably blocks exit of the E-site tRNA. The chain is Small ribosomal subunit protein uS7 from Roseiflexus castenholzii (strain DSM 13941 / HLO8).